We begin with the raw amino-acid sequence, 609 residues long: Acetyl-coenzyme A carboxylase carboxyl transferase subunits beta/alpha (609 aa).

The interval 1 to 271 (MTLEATAIEA…QTAEFLLTHG (271 aa)) is acetyl-coenzyme A carboxylase carboxyl transferase subunit beta. The CoA carboxyltransferase N-terminal domain maps to 39 to 308 (SWLLCGGCGT…GIPRQAGRPD (270 aa)). Residues 39–559 (SWLLCGGCGT…REALRGALAD (521 aa)) are carboxyltransferase. Zn(2+)-binding residues include Cys43, Cys46, Cys62, and Cys65. The C4-type zinc finger occupies 43-65 (CGGCGTMLYERRFAREGRVCADC). Residues 272–582 (VVDLISPRRE…RARFRQFGVA (311 aa)) are acetyl-coenzyme A carboxylase carboxyl transferase subunit alpha. One can recognise a CoA carboxyltransferase C-terminal domain in the interval 314–559 (DPEQLARRDA…REALRGALAD (246 aa)). Low complexity predominate over residues 582–592 (ATPAPATAPAA). The disordered stretch occupies residues 582-609 (ATPAPATAPAASDDAHESQTDRSVEATR). Over residues 594-609 (DDAHESQTDRSVEATR) the composition is skewed to basic and acidic residues.

In the N-terminal section; belongs to the AccD/PCCB family. The protein in the C-terminal section; belongs to the AccA family. As to quaternary structure, acetyl-CoA carboxylase is a heterotetramer composed of biotin carboxyl carrier protein (AccB), biotin carboxylase (AccC) and two subunits of ACCase subunit beta/alpha. Zn(2+) is required as a cofactor.

It is found in the cytoplasm. The catalysed reaction is N(6)-carboxybiotinyl-L-lysyl-[protein] + acetyl-CoA = N(6)-biotinyl-L-lysyl-[protein] + malonyl-CoA. It participates in lipid metabolism; malonyl-CoA biosynthesis; malonyl-CoA from acetyl-CoA: step 1/1. In terms of biological role, component of the acetyl coenzyme A carboxylase (ACC) complex. Biotin carboxylase (BC) catalyzes the carboxylation of biotin on its carrier protein (BCCP) and then the CO(2) group is transferred by the transcarboxylase to acetyl-CoA to form malonyl-CoA. This is Acetyl-coenzyme A carboxylase carboxyl transferase subunits beta/alpha (accD) from Frankia alni (strain DSM 45986 / CECT 9034 / ACN14a).